A 504-amino-acid chain; its full sequence is 6,7,8-trihydroxycoumarin synthase (504 aa).

The chain crosses the membrane as a helical span at residues 1–21 (MEPVFLFLILAFPIASVYLLF). The segment at 363 to 368 (PAPVLV) is substrate specificity. Cys-444 contacts heme.

Belongs to the cytochrome P450 family. Heme is required as a cofactor.

The protein localises to the microsome membrane. The protein operates within secondary metabolite biosynthesis. In terms of biological role, involved in the biosynthesis of coumarins and furanocoumarins (FCs), natural products required for defense responses against attacks by predators with potential medical and agroindustrial usages such as anticoagulant, rodenticide and artificial vanilla substitutes. Able to catalyze the hydroxylation of esculetin to produce 6,7,8-trihydroxycoumarin. This chain is 6,7,8-trihydroxycoumarin synthase, found in Pastinaca sativa (Wild parsnip).